The chain runs to 442 residues: 5-methylthioadenosine/S-adenosylhomocysteine deaminase (442 aa).

Zn(2+) contacts are provided by H72 and H74. Residues E101 and H194 each coordinate substrate. H221 contacts Zn(2+). Residues E224 and D309 each contribute to the substrate site. Residue D309 participates in Zn(2+) binding.

The protein belongs to the metallo-dependent hydrolases superfamily. MTA/SAH deaminase family. The cofactor is Zn(2+).

It carries out the reaction S-adenosyl-L-homocysteine + H2O + H(+) = S-inosyl-L-homocysteine + NH4(+). The enzyme catalyses S-methyl-5'-thioadenosine + H2O + H(+) = S-methyl-5'-thioinosine + NH4(+). In terms of biological role, catalyzes the deamination of 5-methylthioadenosine and S-adenosyl-L-homocysteine into 5-methylthioinosine and S-inosyl-L-homocysteine, respectively. Is also able to deaminate adenosine. The polypeptide is 5-methylthioadenosine/S-adenosylhomocysteine deaminase (Teredinibacter turnerae (strain ATCC 39867 / T7901)).